The following is a 351-amino-acid chain: UDP-3-O-acylglucosamine N-acyltransferase (351 aa).

H257 acts as the Proton acceptor in catalysis.

Belongs to the transferase hexapeptide repeat family. LpxD subfamily. In terms of assembly, homotrimer.

It carries out the reaction a UDP-3-O-[(3R)-3-hydroxyacyl]-alpha-D-glucosamine + a (3R)-hydroxyacyl-[ACP] = a UDP-2-N,3-O-bis[(3R)-3-hydroxyacyl]-alpha-D-glucosamine + holo-[ACP] + H(+). The protein operates within bacterial outer membrane biogenesis; LPS lipid A biosynthesis. Catalyzes the N-acylation of UDP-3-O-acylglucosamine using 3-hydroxyacyl-ACP as the acyl donor. Is involved in the biosynthesis of lipid A, a phosphorylated glycolipid that anchors the lipopolysaccharide to the outer membrane of the cell. The protein is UDP-3-O-acylglucosamine N-acyltransferase of Methylorubrum extorquens (strain CM4 / NCIMB 13688) (Methylobacterium extorquens).